A 487-amino-acid chain; its full sequence is Glutamyl-tRNA(Gln) amidotransferase subunit A (487 aa).

Residues K75 and S150 each act as charge relay system in the active site. The active-site Acyl-ester intermediate is the S174.

This sequence belongs to the amidase family. GatA subfamily. Heterotrimer of A, B and C subunits.

It catalyses the reaction L-glutamyl-tRNA(Gln) + L-glutamine + ATP + H2O = L-glutaminyl-tRNA(Gln) + L-glutamate + ADP + phosphate + H(+). Allows the formation of correctly charged Gln-tRNA(Gln) through the transamidation of misacylated Glu-tRNA(Gln) in organisms which lack glutaminyl-tRNA synthetase. The reaction takes place in the presence of glutamine and ATP through an activated gamma-phospho-Glu-tRNA(Gln). This Deinococcus deserti (strain DSM 17065 / CIP 109153 / LMG 22923 / VCD115) protein is Glutamyl-tRNA(Gln) amidotransferase subunit A.